The following is a 60-amino-acid chain: Mannitol-specific phosphotransferase enzyme IIA component (60 aa).

The PTS EIIA type-2 domain maps to 2-60 (SELFSNDNIFLNVNVNSQNEAIEKAGKALVDSGAVTDAYIQVVSTFMGNGLAIPHGTDD). Histidine 56 (tele-phosphohistidine intermediate) is an active-site residue. The residue at position 56 (histidine 56) is a Phosphohistidine; by HPr.

As to quaternary structure, homodimer or homotrimer. Seems to be a monomer when not phosphorylated.

Its subcellular location is the cytoplasm. Functionally, the phosphoenolpyruvate-dependent sugar phosphotransferase system (sugar PTS), a major carbohydrate active transport system, catalyzes the phosphorylation of incoming sugar substrates concomitantly with their translocation across the cell membrane. The enzyme II CmtAB PTS system is involved in D-mannitol transport. The sequence is that of Mannitol-specific phosphotransferase enzyme IIA component from Staphylococcus aureus.